Here is a 574-residue protein sequence, read N- to C-terminus: Septation ring formation regulator EzrA (574 aa).

Residues 1-7 (MSIGLVI) lie on the Extracellular side of the membrane. Residues 8-26 (LVAVVALLLVVGYGTAVLM) form a helical membrane-spanning segment. Coiled-coil stretches lie at residues 26-47 (MRKRNEALLQNLEERKEALYNL), 105-189 (KAKH…QFVT), 258-346 (ESRF…FLIS), 375-415 (SETK…IEKD), and 455-494 (STSNNIEELVKELEATRVNIESVNRWLEILGNDMEQLEEE). Residues 27–574 (RKRNEALLQN…YEKTRENIRF (548 aa)) lie on the Cytoplasmic side of the membrane.

Belongs to the EzrA family.

It localises to the cell membrane. Negative regulator of FtsZ ring formation; modulates the frequency and position of FtsZ ring formation. Inhibits FtsZ ring formation at polar sites. Interacts either with FtsZ or with one of its binding partners to promote depolymerization. The chain is Septation ring formation regulator EzrA from Streptococcus sanguinis (strain SK36).